Consider the following 209-residue polypeptide: Regulator of G-protein signaling 1 (209 aa).

A disordered region spans residues 18–42; that stretch reads FFSASPKDSKEPSHSLLDDNKQKKR. Residues 24–38 are compositionally biased toward basic and acidic residues; that stretch reads KDSKEPSHSLLDDNK. An RGS domain is found at 85-200; that stretch reads SLEKLLANQM…LKSNIYLNLL (116 aa).

Interacts with GNAI1 and GNAQ. Expressed in multiple tissues.

The protein resides in the cell membrane. It is found in the cytoplasm. The protein localises to the cytosol. In terms of biological role, regulates G protein-coupled receptor signaling cascades, including signaling downstream of the N-formylpeptide chemoattractant receptors and leukotriene receptors. Inhibits B cell chemotaxis toward CXCL12. Inhibits signal transduction by increasing the GTPase activity of G protein alpha subunits, thereby driving them into their inactive GDP-bound form. The protein is Regulator of G-protein signaling 1 (Rgs1) of Rattus norvegicus (Rat).